Here is a 1306-residue protein sequence, read N- to C-terminus: Clustered mitochondria protein homolog (1306 aa).

Positions 1–11 (MAVNNEVNNAA) are enriched in low complexity. The disordered stretch occupies residues 1–47 (MAVNNEVNNAASETPTDVSSSSQKLATEETALTNGADHEEEDGGEAG). Residues 12–33 (SETPTDVSSSSQKLATEETALT) are compositionally biased toward polar residues. Residues 336–580 (DITRTQENYL…RVTPLDITWM (245 aa)) enclose the Clu domain. Disordered stretches follow at residues 630-689 (ERKR…QERI) and 912-956 (KQSQ…SPAA). Positions 656-689 (EPAKSEEPTENGELAKKSESDEAAEPSKPDQERI) are enriched in basic and acidic residues. TPR repeat units lie at residues 1032–1065 (ARVYNSLSMLYYQLDEKEAAMELARKAVIVSERT), 1074–1107 (LLNYLNLGLIAHASGETKLALTYIKHALDLWKVV), and 1116–1149 (ITTINNAAVMLQHLKEYHDSRTWFEASLKICEEV). The disordered stretch occupies residues 1275–1306 (FIEGSDQSNQNKKRPGRSNPKRRGGAAATAGK). The segment covering 1285–1298 (NKKRPGRSNPKRRG) has biased composition (basic residues).

This sequence belongs to the CLU family. As to quaternary structure, may associate with the eukaryotic translation initiation factor 3 (eIF-3) complex.

It localises to the cytoplasm. MRNA-binding protein involved in proper cytoplasmic distribution of mitochondria. The sequence is that of Clustered mitochondria protein homolog from Botryotinia fuckeliana (strain B05.10) (Noble rot fungus).